The primary structure comprises 788 residues: Leucine-rich repeat and fibronectin type-III domain-containing protein 2 (788 aa).

The N-terminal stretch at 1–20 is a signal peptide; it reads METLLGGLLAFGMAFAVVDA. Positions 21–52 constitute an LRRNT domain; sequence CPKYCVCQNLSESLGTLCPSKGLLFVPPDIDR. Topologically, residues 21-534 are extracellular; that stretch reads CPKYCVCQNL…MHSQILGGTM (514 aa). Asn-29 carries an N-linked (GlcNAc...) asparagine glycan. 7 LRR repeats span residues 53–74, 77–98, 101–122, 125–146, 150–171, 174–195, and 198–219; these read RTVE…DFAN, GLVD…SFLD, SLRS…TLRG, NLQH…AFED, TLED…SVRR, NLHQ…TFAD, and KLAR…PIFA. The LRRCT domain occupies 242–288; sequence NPLHCNCELLWLRRLERDDDLETCGSPGSLKGRYFWHIREEEFVCEP. The region spanning 289–375 is the Ig-like domain; the sequence is PLITQHTHKL…GEATATVEVS (87 aa). A disulfide bridge links Cys-310 with Cys-359. N-linked (GlcNAc...) asparagine glycans are attached at residues Asn-332, Asn-341, and Asn-384. The interval 383 to 423 is disordered; the sequence is SNSTSRMAPPKSRLSDITGSSKTSRGGGGSGAGEPPKSTPE. Residues 422 to 518 form the Fibronectin type-III domain; it reads PERAVLVSDV…GCAQFFTKAD (97 aa). A helical membrane pass occupies residues 535–555; sequence ILVIGGIIVATLLVFIVILMV. The Cytoplasmic portion of the chain corresponds to 556–788; it reads RYKVCNHDTP…SSEWVMESTV (233 aa). A compositionally biased stretch (low complexity) spans 620-631; that stretch reads CDSSSSSSLGSG. Disordered stretches follow at residues 620-655 and 668-711; these read CDSS…PSLD and SQRK…RSLL. Positions 642–651 are enriched in pro residues; the sequence is RLPPPAPRPK. The PDZ-binding motif lies at 785–788; the sequence is ESTV.

Belongs to the LRFN family. In terms of assembly, forms heteromeric complexes with LRFN1, LRFN3, LRFN4 and LRFN5. Can form homomeric complexes, but not across cell junctions. Interacts with DLG4. Directly interacts with DLG1, DLG2 and DLG3. Directly interacts with 2 NMDA receptor subunits GRIN1 and GRIN2A. In terms of processing, glycosylated. In terms of tissue distribution, predominantly expressed in the brain, with a weak, but broad expression in the cerebral cortex and diencephalic nuclei. Strongly expressed in both the pyramidal layer and the dentate gyrus of the hippocampus. Also detected in other parts of the central nervous system, including the olfactory bulb, pons, cerebellum, and medulla oblongata, as well as in the peripheral nervous system, such as the ganglia of cranial nerves and the dorsal root ganglion during gestation.

The protein localises to the membrane. Its subcellular location is the synapse. It is found in the postsynaptic cell membrane. In terms of biological role, promotes neurite outgrowth in hippocampal neurons. Enhances the cell surface expression of 2 NMDA receptor subunits GRIN1 and GRIN2A. May play a role in redistributing DLG4 to the cell periphery. This Mus musculus (Mouse) protein is Leucine-rich repeat and fibronectin type-III domain-containing protein 2 (Lrfn2).